Reading from the N-terminus, the 744-residue chain is Prestin (744 aa).

Residues 1-75 (MDHAEENEIP…PITKWLPAYK (75 aa)) lie on the Cytoplasmic side of the membrane. A helical membrane pass occupies residues 76–105 (FKEYVLGDLVSGISTGVLQLPQGLAFAMLA). Topologically, residues 106–108 (AVP) are extracellular. The chain crosses the membrane as a helical span at residues 109–126 (PVFGLYSSFYPVIMYCFF). Over 127–137 (GTSRHISIGPF) the chain is Cytoplasmic. A helical transmembrane segment spans residues 138–151 (AVISLMIGGVAVRL). Topologically, residues 152–168 (VPDDIVIPGGVNATNGT) are extracellular. Positions 158 to 168 (IPGGVNATNGT) match the Involved in motor function motif. N-linked (GlcNAc...) asparagine glycosylation is found at N163 and N166. A helical transmembrane segment spans residues 169–196 (EARDALRVKVAMSVTLLSGIIQFCLGVC). Topologically, residues 197 to 206 (RFGFVAIYLT) are cytoplasmic. A helical membrane pass occupies residues 207–230 (EPLVRGFTTAAAVHVFTSMLKYLF). The Extracellular portion of the chain corresponds to 231–241 (GVKTKRYSGIF). An intramembrane region (helical) is located at residues 242-253 (SVVYSTVAVLQN). At 254–258 (VKNLN) the chain is on the extracellular side. The chain crosses the membrane as a helical span at residues 259-282 (VCSLGVGLMVFGLLLGGKEFNERF). At 283–291 (KEKLPAPIP) the chain is on the cytoplasmic side. The chain crosses the membrane as a helical span at residues 292–307 (LEFFAVVMGTGISAGF). The Extracellular portion of the chain corresponds to 308 to 332 (NLHESYSVDVVGTLPLGLLPPANPD). A helical transmembrane segment spans residues 333–367 (TSLFHLVYVDAIAIAIVGFSVTISMAKTLANKHGY). Topologically, residues 368–370 (QVD) are cytoplasmic. A helical membrane pass occupies residues 371 to 388 (GNQELIALGICNSIGSLF). Over 389–396 (QTFSISCS) the chain is Extracellular. Residues 397 to 406 (LSRSLVQEGT) form a helical membrane-spanning segment. S398 serves as a coordination point for salicylate. Topologically, residues 407–410 (GGKT) are cytoplasmic. Residues 411–432 (QLAGCLASLMILLVILATGFLF) traverse the membrane as a helical segment. The Extracellular segment spans residues 433-436 (ESLP). The chain crosses the membrane as a helical span at residues 437–464 (QAVLSAIVIVNLKGMFMQFSDLPFFWRT). Residue S465 is a topological domain, cytoplasmic. The helical transmembrane segment at 466–481 (KIELTIWLTTFVSSLF) threads the bilayer. Over 482-483 (LG) the chain is Extracellular. The chain crosses the membrane as a helical span at residues 484 to 504 (LDYGLITAVIIALLTVIYRTQ). The extended region for STAS domain stretch occupies residues 505 to 718 (SPSYKVLGQL…AVLGSQVREA (214 aa)). The Cytoplasmic segment spans residues 505–744 (SPSYKVLGQL…PNATPTTPEA (240 aa)). Residues 525–713 (AYEEVKEIPG…HSIHDAVLGS (189 aa)) enclose the STAS domain. A disordered region spans residues 720 to 744 (AEQEATASLPQEDMEPNATPTTPEA).

It belongs to the SLC26A/SulP transporter (TC 2.A.53) family. In terms of assembly, homodimer. Interacts (via STAS domain) with CALM; this interaction is calcium-dependent and the STAS domain interacts with only one lobe of CALM which is an elongated conformation. Interacts with MYH1. As to expression, expressed in the outer hair cells (OHC) of the organ of Corti of the inner ear. Also weak expression in brain and testis. Very weakly expressed in heart, spleen, muscle and lactating mammary glands. Expressed in cardiac myocytes (at protein level), both in the surface sarcolemma and along the t-tubule. Weakly expressed in skeletal muscle cells (at protein level).

Its subcellular location is the lateral cell membrane. The catalysed reaction is 2 hydrogencarbonate(in) + chloride(out) = 2 hydrogencarbonate(out) + chloride(in). In terms of biological role, voltage-sensitive motor protein that drives outer hair cell (OHC) electromotility (eM) and participates in sound amplification in the hearing organ. Converts changes in the transmembrane electric potential into mechanical displacements resulting in the coupling of its expansion to movement of a charged voltage sensor across the lipid membrane. The nature of the voltage sensor is not completely clear, and two models compete. In the first model, acts as an incomplete transporter where intracellular chloride anion acts as extrinsic voltage sensor that drives conformational change in the protein which is sufficient to produce a length change in the plane of the membrane and hence in the length of the OHC. The second model in which multiple charged amino acid residues are distributed at the intracellular and extracellular membrane interfaces that form an intrinsic voltage sensor, whose movement produces the non-linear capacitance (NLC). However, the effective voltage sensor may be the result of a hybrid voltage sensor, assembled from intrinsic charge (charged residues) and extrinsic charge (bound anion). Notably, binding of anions to the anion-binding pocket partially neutralizes the intrinsic positive charge rather than to form an electrically negative sensor, therefore remaining charge may serve as voltage sensor that, after depolarization, moves from down (expanded state) to up (contracted) conformation, which is accompanied by an eccentric contraction of the intermembrane cross-sectional area of the protein as well as a major increase in the hydrophobic thickness of the protein having as consequences the plasma membrane thickening and the cell contraction after membrane depolarization. The anion-binding pocket transits from the inward-open (Down) state, where it is exposed toward the intracellular solvent in the absence of anion, to the occluded (Up) state upon anion binding. Salicylate competes for the anion-binding site and inhibits the voltage-sensor movement, and therefore inhibits the charge transfer and electromotility by displacing Cl(-) from the anion-binding site and by preventing the structural transitions to the contracted state. In addition, can act as a weak Cl(-)/HCO3(-) antiporter across the cell membrane and so regulate the intracellular pH of the outer hair cells (OHCs), while firstly found as being unable to mediate electrogenic anion transport. Moreover, supports a role in cardiac mechanical amplification serving as an elastic element to enhance the actomyosin- based sarcomere contraction system. This chain is Prestin, found in Mus musculus (Mouse).